The sequence spans 288 residues: Nucleotide-binding protein PM0169 (288 aa).

An ATP-binding site is contributed by 8-15; it reads GHSGAGKS. Position 56 to 59 (56 to 59) interacts with GTP; that stretch reads DIRN.

Belongs to the RapZ-like family.

Displays ATPase and GTPase activities. The polypeptide is Nucleotide-binding protein PM0169 (Pasteurella multocida (strain Pm70)).